Consider the following 1174-residue polypeptide: Male determiner protein Mdmd(III) (1174 aa).

A compositionally biased stretch (basic and acidic residues) spans 1–15 (MNATDAESRKPENKP). 3 disordered regions span residues 1 to 51 (MNAT…SGQR), 80 to 109 (KDGS…HPVE), and 136 to 259 (KQLS…LRRS). Low complexity predominate over residues 16 to 35 (SSESSSSGSTSGSSDGEVSS). The segment covering 36-47 (KTYFKNNKSKVL) has biased composition (polar residues). Positions 80–92 (KDGSNEMLPKEDS) are enriched in basic and acidic residues. Residues 93–102 (INTNHNYTTD) show a composition bias toward polar residues. Over residues 138-153 (LSAYRSRSRSTRLSYS) the composition is skewed to low complexity. The span at 167–180 (SRYKKSVLRNRRTS) shows a compositional bias: basic residues. Over residues 183-200 (HGRDSSTTKRSVSRDKDN) the composition is skewed to basic and acidic residues. Residues 201–223 (RLRRRIGSSRSHTRSHSRFRRSE) are compositionally biased toward basic residues. Over residues 235-259 (RSQERRHERRRSMSSDYERIALRRS) the composition is skewed to basic and acidic residues. Residues 348 to 531 (KKYIHGYINK…KVLFQVRRDG (184 aa)) enclose the MIF4G domain. Positions 641 to 757 (ALRRTIYLTL…SWDVLDCIKL (117 aa)) constitute an MI domain. The segment covering 840-857 (SAPSSSSSSSLSSELSAP) has biased composition (low complexity). Disordered stretches follow at residues 840-1045 (SAPS…SRTK) and 1096-1133 (KDNY…NHSR). Positions 869–909 (KKKHKGKNKKMTKKKNPSKKKEKTKKFVGKNKIAAKNKTIK) are enriched in basic residues. Over residues 910-924 (RRTDKDNSSSKDNFL) the composition is skewed to basic and acidic residues. Low complexity predominate over residues 926–957 (SESSSNESISLDSLSSELFAPSSYSSSESSND). The segment covering 963-1001 (KHKGKNKKMTKKKNPSNKKEKTKKKLSKNKKAPNKNTKK) has biased composition (basic residues). Over residues 1010–1020 (SSESSISESKS) the composition is skewed to low complexity. Residues 1034 to 1045 (RKKRVTSKSRTK) show a composition bias toward basic residues. The span at 1103–1118 (QNHEISQRHDSEIKRR) shows a compositional bias: basic and acidic residues. A compositionally biased stretch (basic residues) spans 1119 to 1130 (REERKKRHHEKN).

It belongs to the CWC22 family. In terms of assembly, component of the spliceosome C complex.

It is found in the nucleus speckle. Male determiner protein (M-factor) that controls male somatic sexual differentiation. Acts as a dominant factor that regulates the mRNA splicing of transformer (tra) and doublesex (dsx) transcripts and promotes expression of male splice forms of tra and dsx. Probably acts as a component of the spliceosome C complex required for mRNA splicing factor and exon-junction complex (EJC) assembly. Hinders eIF4AIII from non-specifically binding RNA and escorts it to the splicing machinery to promote EJC assembly on mature mRNAs. The protein is Male determiner protein Mdmd(III) of Musca domestica (House fly).